The chain runs to 274 residues: Large ribosomal subunit protein uL2cz/uL2cy (274 aa).

Disordered regions lie at residues 1–23 and 224–274; these read MAIHLYKTSTPSTRNRAVDSQVK and NPVD…RRSK.

It belongs to the universal ribosomal protein uL2 family. As to quaternary structure, part of the 50S ribosomal subunit.

Its subcellular location is the plastid. It is found in the chloroplast. This chain is Large ribosomal subunit protein uL2cz/uL2cy (rpl2-A), found in Vitis vinifera (Grape).